Consider the following 78-residue polypeptide: Acyl carrier protein (78 aa).

The region spanning 2 to 77 (STIEESVKAI…AAIDFIQASQ (76 aa)) is the Carrier domain. Ser37 bears the O-(pantetheine 4'-phosphoryl)serine mark.

The protein belongs to the acyl carrier protein (ACP) family. 4'-phosphopantetheine is transferred from CoA to a specific serine of apo-ACP by AcpS. This modification is essential for activity because fatty acids are bound in thioester linkage to the sulfhydryl of the prosthetic group.

It is found in the cytoplasm. The protein operates within lipid metabolism; fatty acid biosynthesis. Functionally, carrier of the growing fatty acid chain in fatty acid biosynthesis. The sequence is that of Acyl carrier protein from Sodalis glossinidius (strain morsitans).